Here is a 228-residue protein sequence, read N- to C-terminus: ATP-dependent dethiobiotin synthetase BioD (228 aa).

12–17 (EIGKTT) contributes to the ATP binding site. Threonine 16 provides a ligand contact to Mg(2+). Residue lysine 37 is part of the active site. Residue serine 41 coordinates substrate. Residues aspartate 54, 116–119 (EGAG), and 205–207 (PRL) contribute to the ATP site. Mg(2+) contacts are provided by aspartate 54 and glutamate 116.

Belongs to the dethiobiotin synthetase family. In terms of assembly, homodimer. Mg(2+) serves as cofactor.

The protein resides in the cytoplasm. It catalyses the reaction (7R,8S)-7,8-diammoniononanoate + CO2 + ATP = (4R,5S)-dethiobiotin + ADP + phosphate + 3 H(+). It functions in the pathway cofactor biosynthesis; biotin biosynthesis; biotin from 7,8-diaminononanoate: step 1/2. Functionally, catalyzes a mechanistically unusual reaction, the ATP-dependent insertion of CO2 between the N7 and N8 nitrogen atoms of 7,8-diaminopelargonic acid (DAPA, also called 7,8-diammoniononanoate) to form a ureido ring. The protein is ATP-dependent dethiobiotin synthetase BioD of Pseudomonas paraeruginosa (strain DSM 24068 / PA7) (Pseudomonas aeruginosa (strain PA7)).